The chain runs to 209 residues: tRNA (guanine-N(7)-)-methyltransferase (209 aa).

S-adenosyl-L-methionine-binding residues include Asp-35, Glu-60, Asn-87, and Asp-113. The active site involves Asp-113. Substrate contacts are provided by Lys-117 and Asp-149.

It belongs to the class I-like SAM-binding methyltransferase superfamily. TrmB family.

It catalyses the reaction guanosine(46) in tRNA + S-adenosyl-L-methionine = N(7)-methylguanosine(46) in tRNA + S-adenosyl-L-homocysteine. Its pathway is tRNA modification; N(7)-methylguanine-tRNA biosynthesis. In terms of biological role, catalyzes the formation of N(7)-methylguanine at position 46 (m7G46) in tRNA. This Prochlorococcus marinus (strain MIT 9215) protein is tRNA (guanine-N(7)-)-methyltransferase.